The primary structure comprises 185 residues: Small ribosomal subunit protein uS5 (185 aa).

Residues 18-81 (FVDKLVHINR…ESAKRALIRV (64 aa)) enclose the S5 DRBM domain. Residues 157 to 185 (SPRSVAARRGIKVSQLQSRRRVEDAEATD) form a disordered region. Positions 176–185 (RRVEDAEATD) are enriched in basic and acidic residues.

The protein belongs to the universal ribosomal protein uS5 family. As to quaternary structure, part of the 30S ribosomal subunit. Contacts proteins S4 and S8.

In terms of biological role, with S4 and S12 plays an important role in translational accuracy. Functionally, located at the back of the 30S subunit body where it stabilizes the conformation of the head with respect to the body. This chain is Small ribosomal subunit protein uS5, found in Xanthobacter autotrophicus (strain ATCC BAA-1158 / Py2).